We begin with the raw amino-acid sequence, 171 residues long: Ribosome maturation factor RimM (171 aa).

The 73-residue stretch at 98-170 (EGEFYLHQII…AVQVSVPEGL (73 aa)) folds into the PRC barrel domain.

Belongs to the RimM family. As to quaternary structure, binds ribosomal protein uS19.

It localises to the cytoplasm. In terms of biological role, an accessory protein needed during the final step in the assembly of 30S ribosomal subunit, possibly for assembly of the head region. Essential for efficient processing of 16S rRNA. May be needed both before and after RbfA during the maturation of 16S rRNA. It has affinity for free ribosomal 30S subunits but not for 70S ribosomes. The protein is Ribosome maturation factor RimM of Pediococcus pentosaceus (strain ATCC 25745 / CCUG 21536 / LMG 10740 / 183-1w).